The following is a 604-amino-acid chain: MSKISDLNYSQHITLADNFKQKSEVLNTWRVGMNDFARIAGGQDNRRNILSPGAFLEFLAKIFTLGYVDFSKRSNEAGRNMMAHIKSSSYSKDTNGNEKMKFYMNNPVGERADSPKVIIEISLSTITTMGTRQGHTAIIFPQPDGSTNRYEGKSFERKDESSLHLITNKVLACYQSEANKKIARLLNNNQELNNLQKLNNLQKLNNLLKLNNIQGLNNPQELNNPQNLNDSQELNNSQELNSPQELNDPQELNNSQDLNNSKVSCTVSVDSTITGLLKEPLNNALLAIRNEHLLLMPHVCDESISYLLGEKGILEEIDKLYALNDHGIDNDKVGNNEINDIKVNLSHILIDSLDDAKVNLTPVIDSILETFSKSPYINDVRILDWCFNKSMQYFDDTKKIKHACSVINHINLRSDQSKIAETLFFNLDKEPYKNSPELQGLIWNKLVVYVNEFNLSNREKTNLIQRLFDNVESIFNEVPVSILVNDIFMNDFFMKNPEMINWYFPQLLKSYEGEKIYFDNLKYDLNDNDKESNKEILKNQPDNVIKEKLNNEYKLRFRMMQTILQSRVNVLPYINEQRLNKLNPPENLRIAIEHFGWKNRPITA.

The interval 239–259 (ELNSPQELNDPQELNNSQDLN) is disordered.

This is an uncharacterized protein from Escherichia coli (strain K12).